Here is a 198-residue protein sequence, read N- to C-terminus: Ribosome maturation factor RimP (198 aa).

This sequence belongs to the RimP family.

The protein localises to the cytoplasm. Its function is as follows. Required for maturation of 30S ribosomal subunits. This Rhizobium rhizogenes (strain K84 / ATCC BAA-868) (Agrobacterium radiobacter) protein is Ribosome maturation factor RimP.